A 721-amino-acid polypeptide reads, in one-letter code: Catalase-peroxidase (721 aa).

Residues 89-212 constitute a cross-link (tryptophyl-tyrosyl-methioninium (Trp-Tyr) (with M-238)); it reads WHSAGTYRTG…LAAVQMGLIY (124 aa). The active-site Proton acceptor is the H90. Residues 212-238 constitute a cross-link (tryptophyl-tyrosyl-methioninium (Tyr-Met) (with W-89)); it reads YVNPEGPNGDPDPFAAAVDIRETFARM. H253 is a binding site for heme b.

The protein belongs to the peroxidase family. Peroxidase/catalase subfamily. In terms of assembly, homodimer or homotetramer. Heme b is required as a cofactor. Post-translationally, formation of the three residue Trp-Tyr-Met cross-link is important for the catalase, but not the peroxidase activity of the enzyme.

It catalyses the reaction H2O2 + AH2 = A + 2 H2O. The catalysed reaction is 2 H2O2 = O2 + 2 H2O. In terms of biological role, bifunctional enzyme with both catalase and broad-spectrum peroxidase activity. The chain is Catalase-peroxidase from Shewanella baltica (strain OS155 / ATCC BAA-1091).